A 412-amino-acid chain; its full sequence is Gamma-glutamyl phosphate reductase (412 aa).

It belongs to the gamma-glutamyl phosphate reductase family.

The protein localises to the cytoplasm. The enzyme catalyses L-glutamate 5-semialdehyde + phosphate + NADP(+) = L-glutamyl 5-phosphate + NADPH + H(+). It functions in the pathway amino-acid biosynthesis; L-proline biosynthesis; L-glutamate 5-semialdehyde from L-glutamate: step 2/2. In terms of biological role, catalyzes the NADPH-dependent reduction of L-glutamate 5-phosphate into L-glutamate 5-semialdehyde and phosphate. The product spontaneously undergoes cyclization to form 1-pyrroline-5-carboxylate. The polypeptide is Gamma-glutamyl phosphate reductase (Nitratiruptor sp. (strain SB155-2)).